The primary structure comprises 374 residues: DNA replication and repair protein RecF (374 aa).

Residue 30-37 coordinates ATP; that stretch reads GNNAQGKS.

Belongs to the RecF family.

The protein localises to the cytoplasm. Its function is as follows. The RecF protein is involved in DNA metabolism; it is required for DNA replication and normal SOS inducibility. RecF binds preferentially to single-stranded, linear DNA. It also seems to bind ATP. The sequence is that of DNA replication and repair protein RecF from Nostoc punctiforme (strain ATCC 29133 / PCC 73102).